The chain runs to 144 residues: MNAAVGLRRRARLSRLVSFSASHRLHSPSLSAEENLKVFGKCNNPNGHGHNYKVVVTIHGEIDPVTGMVMNLTDLKEYMEEAIMKPLDHKNLDLDVPYFADVVSTTENVAVYIWENLQRLLPVGALYKVKVYETDNNIVVYKGE.

A propeptide spanning residues 1–4 is cleaved from the precursor; sequence MNAA. Serine 18 carries the phosphoserine modification. Residue histidine 23 participates in Zn(2+) binding. Serine 27 is subject to Phosphoserine. Catalysis depends on cysteine 42, which acts as the Proton acceptor. The Zn(2+) site is built by histidine 48 and histidine 50. Residue histidine 89 is the Charge relay system of the active site. A Phosphotyrosine modification is found at tyrosine 127. Catalysis depends on glutamate 133, which acts as the Charge relay system.

It belongs to the PTPS family. Homohexamer formed of two homotrimers in a head to head fashion. Zn(2+) serves as cofactor. Phosphorylation of Ser-18 is required for maximal enzyme activity.

It carries out the reaction 7,8-dihydroneopterin 3'-triphosphate = 6-pyruvoyl-5,6,7,8-tetrahydropterin + triphosphate + H(+). It participates in cofactor biosynthesis; tetrahydrobiopterin biosynthesis; tetrahydrobiopterin from 7,8-dihydroneopterin triphosphate: step 1/3. In terms of biological role, involved in the biosynthesis of tetrahydrobiopterin, an essential cofactor of aromatic amino acid hydroxylases. Catalyzes the transformation of 7,8-dihydroneopterin triphosphate into 6-pyruvoyl tetrahydropterin. This is 6-pyruvoyl tetrahydrobiopterin synthase (Pts) from Rattus norvegicus (Rat).